We begin with the raw amino-acid sequence, 452 residues long: Agmatine coumaroyltransferase (452 aa).

Active-site proton acceptor residues include His-163 and Asp-396.

The protein belongs to the plant acyltransferase family.

It catalyses the reaction 4-coumaroyl-CoA + agmatine = N-(4-guanidinobutyl)-4-hydroxycinnamamide + CoA + H(+). Its function is as follows. Involved in the biosynthesis of hydroxycinnamic acid amides, which play a role in defense against pathogens. Agmatine is the preferred acyl acceptor, lower activity is observed towards putrescine. The preferred acyl donor is p-coumaroyl-CoA, lower activity is seen towards feruloyl-CoA. This is Agmatine coumaroyltransferase from Arabidopsis thaliana (Mouse-ear cress).